Reading from the N-terminus, the 249-residue chain is Chitooligosaccharide deacetylase (249 aa).

Positions 61 and 125 each coordinate Mg(2+).

The protein belongs to the YdjC deacetylase family. ChbG subfamily. As to quaternary structure, homodimer. It depends on Mg(2+) as a cofactor.

The protein resides in the cytoplasm. It catalyses the reaction N,N'-diacetylchitobiose + H2O = N-acetyl-beta-D-glucosaminyl-(1-&gt;4)-D-glucosamine + acetate. The catalysed reaction is diacetylchitobiose-6'-phosphate + H2O = N'-monoacetylchitobiose-6'-phosphate + acetate. It functions in the pathway glycan degradation; chitin degradation. Its function is as follows. Involved in the degradation of chitin. ChbG is essential for growth on the acetylated chitooligosaccharides chitobiose and chitotriose but is dispensable for growth on cellobiose and chitosan dimer, the deacetylated form of chitobiose. Deacetylation of chitobiose-6-P and chitotriose-6-P is necessary for both the activation of the chb promoter by the regulatory protein ChbR and the hydrolysis of phosphorylated beta-glucosides by the phospho-beta-glucosidase ChbF. Catalyzes the removal of only one acetyl group from chitobiose-6-P to yield monoacetylchitobiose-6-P, the inducer of ChbR and the substrate of ChbF. This chain is Chitooligosaccharide deacetylase, found in Escherichia coli O9:H4 (strain HS).